The chain runs to 198 residues: Probable GTP-binding protein EngB (198 aa).

Residues 22–195 form the EngB-type G domain; that stretch reads DLPEIALAGR…WKAIHKFTKT (174 aa). GTP-binding positions include 30–37, 57–61, 75–78, 142–145, and 174–176; these read GRSNVGKS, GKTQT, DVPG, TKAD, and FSS. The Mg(2+) site is built by Ser37 and Thr59.

It belongs to the TRAFAC class TrmE-Era-EngA-EngB-Septin-like GTPase superfamily. EngB GTPase family. Mg(2+) serves as cofactor.

Functionally, necessary for normal cell division and for the maintenance of normal septation. This chain is Probable GTP-binding protein EngB, found in Bacillus cytotoxicus (strain DSM 22905 / CIP 110041 / 391-98 / NVH 391-98).